The sequence spans 394 residues: 1-acylglycerol-3-phosphate O-acyltransferase ICT1 (394 aa).

Residues 74–381 (VLIHGYAASS…AGHNLFLDNP (308 aa)) enclose the AB hydrolase-1 domain. The short motif at 374–379 (HNLFLD) is the HXXXXD motif element.

The protein belongs to the peptidase S33 family. ABHD4/ABHD5 subfamily.

The catalysed reaction is a 1-acyl-sn-glycero-3-phosphate + an acyl-CoA = a 1,2-diacyl-sn-glycero-3-phosphate + CoA. In terms of biological role, lysophosphatidic acid acyltransferase involved in membrane remodeling leading to increased organic solvent tolerance. Involved in resistance to azoles and copper. This is 1-acylglycerol-3-phosphate O-acyltransferase ICT1 (ICT1) from Saccharomyces cerevisiae (strain ATCC 204508 / S288c) (Baker's yeast).